The primary structure comprises 295 residues: CCAAT-binding factor complex subunit php4 (295 aa).

Residues 1 to 19 (MESSKSPSEVEKSSSASPA) are compositionally biased toward low complexity. Residues 1-69 (MESSKSPSEV…GPTSALSVEE (69 aa)) are disordered. Residues 73–111 (RVREKQYQDTIGKLQKENNELLEQLEMLQAQLKNSTLDS) are a coiled coil. A Nuclear export signal motif is present at residues 93–100 (LLEQLEML). The segment at 108–130 (TLDSPKEVEVNSEVVKPDSATTE) is disordered.

Component of tha CCAAT-binding complex composed of at least php2, php3, php4 and php5. Interacts with crm1 and grx4.

The protein resides in the cytoplasm. Its subcellular location is the nucleus. It is found in the cytoskeleton. The protein localises to the spindle pole. Functionally, component of the transcription regulatory CCAAT-binding complex. Required for the reprogramming of the cell for iron use. Down-regulates pcl1, sdh4, and isa1 underlow-iron conditions. This is CCAAT-binding factor complex subunit php4 (php4) from Schizosaccharomyces pombe (strain 972 / ATCC 24843) (Fission yeast).